The sequence spans 37 residues: Large ribosomal subunit protein bL36A (37 aa).

It belongs to the bacterial ribosomal protein bL36 family.

In Leifsonia xyli subsp. xyli (strain CTCB07), this protein is Large ribosomal subunit protein bL36A.